The chain runs to 114 residues: DNA-binding protein Mbur_0117 (114 aa).

Residues E14–A37 are disordered. The span at Q16–A35 shows a compositional bias: low complexity.

This sequence belongs to the PDCD5 family.

The protein is DNA-binding protein Mbur_0117 of Methanococcoides burtonii (strain DSM 6242 / NBRC 107633 / OCM 468 / ACE-M).